The chain runs to 254 residues: Transcription factor CAULIFLOWER (254 aa).

Residues 1 to 61 (MGRGRVEMKR…GKLFEYSSES (61 aa)) form the MADS-box domain. One can recognise a K-box domain in the interval 90-180 (QTNWSMEYSR…TKQIKERESI (91 aa)). Positions 182 to 191 (RTHQNQSEQQ) are enriched in polar residues. The interval 182–205 (RTHQNQSEQQNRSHHVAPQPQPQL) is disordered.

Homodimer capable of binding to CArG-box sequences.

The protein resides in the nucleus. Probable transcription factor that promotes early floral meristem identity in synergy with APETALA1, FRUITFULL and LEAFY. Is required subsequently for the transition of an inflorescence meristem into a floral meristem. Seems to be partially redundant to the function of APETALA1. The polypeptide is Transcription factor CAULIFLOWER (CAL) (Brassica rapa subsp. pekinensis (Chinese cabbage)).